The primary structure comprises 373 residues: Lipoyl amidotransferase LIPT1, mitochondrial (373 aa).

The N-terminal 25 residues, 1–25, are a transit peptide targeting the mitochondrion; that stretch reads MLIPLSMKNCFRLLCQHKVPAAGFK. Residues 57–243 enclose the BPL/LPL catalytic domain; that stretch reads LEGKPILFLW…EYAAHHQVDG (187 aa). (R)-lipoyl-5'-AMP is bound by residues Tyr107, Lys151, Lys161, and Thr179.

It belongs to the LplA family.

Its subcellular location is the mitochondrion. It catalyses the reaction (R)-lipoyl-5'-AMP + L-lysyl-[lipoyl-carrier protein] = N(6)-[(R)-lipoyl]-L-lysyl-[lipoyl-carrier protein] + AMP + 2 H(+). It carries out the reaction N(6)-[(R)-lipoyl]-L-lysyl-[glycine-cleavage complex H protein] + L-lysyl-[lipoyl-carrier protein] = L-lysyl-[glycine-cleavage complex H protein] + N(6)-[(R)-lipoyl]-L-lysyl-[lipoyl-carrier protein]. It functions in the pathway protein modification; protein lipoylation via exogenous pathway; protein N(6)-(lipoyl)lysine from lipoate: step 2/2. Its function is as follows. Lipoyl amidotransferase that catalyzes the transfer of lipoyl moieties from lipoyl-protein H of the glycine cleavage system (lipoyl-GCSH) to E2 subunits of the pyruvate dehydrogenase complex (PDCE2). Unable to catalyze the transfer of octanoyl from octanoyl-GCSH to PDCE2. In vitro, it is also able to catalyze the transfer of the lipoyl group from lipoyl-AMP to the specific lysine residue of lipoyl domains of lipoate-dependent enzymes but this reaction may not be physiologically relevant. The polypeptide is Lipoyl amidotransferase LIPT1, mitochondrial (Mus musculus (Mouse)).